The sequence spans 493 residues: Ribosomal protein uS12 methylthiotransferase RimO (493 aa).

The region spanning 5–121 (RTVALVTLGC…ISDRLQTILN (117 aa)) is the MTTase N-terminal domain. The [4Fe-4S] cluster site is built by Cys14, Cys50, and Cys84. The tract at residues 153 to 177 (LPGHGPTDLPEGVAPASGPRAPLRR) is disordered. In terms of domain architecture, Radical SAM core spans 179-410 (LDGSPVASVK…RLAEELVSQR (232 aa)). Positions 193, 197, and 200 each coordinate [4Fe-4S] cluster. One can recognise a TRAM domain in the interval 412-482 (DERVGATVRV…GVDLVAEPLL (71 aa)).

The protein belongs to the methylthiotransferase family. RimO subfamily. The cofactor is [4Fe-4S] cluster.

The protein localises to the cytoplasm. It carries out the reaction L-aspartate(89)-[ribosomal protein uS12]-hydrogen + (sulfur carrier)-SH + AH2 + 2 S-adenosyl-L-methionine = 3-methylsulfanyl-L-aspartate(89)-[ribosomal protein uS12]-hydrogen + (sulfur carrier)-H + 5'-deoxyadenosine + L-methionine + A + S-adenosyl-L-homocysteine + 2 H(+). Its function is as follows. Catalyzes the methylthiolation of an aspartic acid residue of ribosomal protein uS12. The polypeptide is Ribosomal protein uS12 methylthiotransferase RimO (Streptomyces coelicolor (strain ATCC BAA-471 / A3(2) / M145)).